A 90-amino-acid polypeptide reads, in one-letter code: Probable Fe(2+)-trafficking protein (90 aa).

This sequence belongs to the Fe(2+)-trafficking protein family.

Could be a mediator in iron transactions between iron acquisition and iron-requiring processes, such as synthesis and/or repair of Fe-S clusters in biosynthetic enzymes. The polypeptide is Probable Fe(2+)-trafficking protein (Pseudomonas fluorescens (strain SBW25)).